The primary structure comprises 353 residues: Farnesyl pyrophosphate synthase (353 aa).

The isopentenyl diphosphate site is built by K57, R60, and Q96. K57 carries the N6-(2-hydroxyisobutyryl)lysine; alternate modification. Position 57 is an N6-acetyllysine; alternate (K57). Mg(2+) is bound by residues D103 and D107. R112 contributes to the dimethylallyl diphosphate binding site. R113 contacts isopentenyl diphosphate. Dimethylallyl diphosphate-binding residues include K200, T201, Q240, K257, and K266.

Belongs to the FPP/GGPP synthase family. Homodimer. Interacts with RSAD2. Mg(2+) is required as a cofactor.

It localises to the cytoplasm. It catalyses the reaction isopentenyl diphosphate + dimethylallyl diphosphate = (2E)-geranyl diphosphate + diphosphate. The enzyme catalyses isopentenyl diphosphate + (2E)-geranyl diphosphate = (2E,6E)-farnesyl diphosphate + diphosphate. The protein operates within isoprenoid biosynthesis; farnesyl diphosphate biosynthesis; farnesyl diphosphate from geranyl diphosphate and isopentenyl diphosphate: step 1/1. Its pathway is isoprenoid biosynthesis; geranyl diphosphate biosynthesis; geranyl diphosphate from dimethylallyl diphosphate and isopentenyl diphosphate: step 1/1. With respect to regulation, inactivated by interferon-induced RSAD2. This inactivation may result of disruption of lipid rafts at the plasma membrane, and thus have an antiviral effect since many enveloped viruses need lipid rafts to bud efficiently out of the cell. Functionally, key enzyme in isoprenoid biosynthesis which catalyzes the formation of farnesyl diphosphate (FPP), a precursor for several classes of essential metabolites including sterols, dolichols, carotenoids, and ubiquinones. FPP also serves as substrate for protein farnesylation and geranylgeranylation. Catalyzes the sequential condensation of isopentenyl pyrophosphate with the allylic pyrophosphates, dimethylallyl pyrophosphate, and then with the resultant geranylpyrophosphate to the ultimate product farnesyl pyrophosphate. The protein is Farnesyl pyrophosphate synthase (Fdps) of Mus musculus (Mouse).